Consider the following 84-residue polypeptide: Alpha-like toxin BmK M1 (84 aa).

A signal peptide spans 1–19 (MNYLVMISFALLLMTGVES). One can recognise an LCN-type CS-alpha/beta domain in the interval 21–83 (RDAYIAKPHN…VPIRVPGKCH (63 aa)). Intrachain disulfides connect C31–C82, C35–C55, C41–C65, and C45–C67. Position 84 (R84) is a propeptide, removed by a carboxypeptidase.

It belongs to the long (4 C-C) scorpion toxin superfamily. Sodium channel inhibitor family. Alpha subfamily. In terms of tissue distribution, expressed by the venom gland.

It is found in the secreted. Functionally, alpha toxins bind voltage-independently at site-3 of sodium channels (Nav) and inhibit the inactivation of the activated channels thereby blocking neuronal transmission. This toxin is active against both mammals and insects, and is classified as an alpha-like toxin. It is active on Nav1.2/SCN2A (EC(50)=139-252 nM), Nav1.3/SCN3A (EC(50)=565 nM), Nav1.4/SCN4A and Nav1.5/SCN5A (EC(50)=195-500 nM), Nav1.6/SCN8A (EC(50)=214 nM), and drosophila DmNav1 (EC(50)=30 nM). In mNav1.6/SCN8A, the toxin induces a large increase in both transient and persistent currents, which correlates with a prominent reduction in the fast component of inactivating current. In rNav1.2/SCN2A and rNav1.3/SCN3A, toxin-increased currents is much smaller. Moreover, the toxin only accelerates the slow inactivation development and delay recovery of mNav1.6/SCN8A through binding to the channel in the open state. Is 6-fold more toxic than BmK-M2. In vivo, intrahippocampal injection into rat induces epileptiform responses. In addition, intraplantar injection into rat induces spontaneous nociception and hyperalgesia. This chain is Alpha-like toxin BmK M1, found in Olivierus martensii (Manchurian scorpion).